A 289-amino-acid chain; its full sequence is ATP synthase subunit a (289 aa).

Helical transmembrane passes span 43–63, 101–121, 160–180, 193–213, 232–252, and 259–279; these read AFHVDTLGWSVALGLIFVLIF, SAVIAPLALTIFVWVFLMNAV, LSVFALIIFYSIKVKGIGGFI, LFVQALLIPVNFLLEFVTLIA, VFILIAVMFGSGLLWLSGLGV, and AVFHILIITLQAFIFMMLTIV.

It belongs to the ATPase A chain family. In terms of assembly, F-type ATPases have 2 components, CF(1) - the catalytic core - and CF(0) - the membrane proton channel. CF(1) has five subunits: alpha(3), beta(3), gamma(1), delta(1), epsilon(1). CF(0) has three main subunits: a(1), b(2) and c(9-12). The alpha and beta chains form an alternating ring which encloses part of the gamma chain. CF(1) is attached to CF(0) by a central stalk formed by the gamma and epsilon chains, while a peripheral stalk is formed by the delta and b chains.

It localises to the cell inner membrane. Key component of the proton channel; it plays a direct role in the translocation of protons across the membrane. The protein is ATP synthase subunit a of Pseudomonas syringae pv. syringae (strain B728a).